We begin with the raw amino-acid sequence, 492 residues long: Propanoyl-CoA:succinate CoA transferase (492 aa).

260-264 lines the CoA pocket; sequence GVGNI. Glu-286 serves as the catalytic 5-glutamyl coenzyme A thioester intermediate. Asn-376 and Gly-380 together coordinate CoA.

This sequence belongs to the acetyl-CoA hydrolase/transferase family.

The enzyme catalyses propanoyl-CoA + succinate = propanoate + succinyl-CoA. Catalyzes the transfer of coenzyme A from propionyl-CoA to succinate. Could be part of a pathway that converts succinate to propionate. This is Propanoyl-CoA:succinate CoA transferase from Escherichia coli (strain K12).